We begin with the raw amino-acid sequence, 360 residues long: Putative F-box protein At1g65770 (360 aa).

Residues 2–50 (ADWSTLPVDLLNMIAGRLFSNIELKRFRSICRSWRSSVPGAGKKNPFRT) form the F-box domain.

This chain is Putative F-box protein At1g65770, found in Arabidopsis thaliana (Mouse-ear cress).